We begin with the raw amino-acid sequence, 356 residues long: Probable farnesyl diphosphate synthase DDB_G0278823 (356 aa).

Positions 55, 58, and 94 each coordinate isopentenyl diphosphate. Mg(2+) contacts are provided by Asp101 and Asp105. Arg110 lines the dimethylallyl diphosphate pocket. Residue Arg111 coordinates isopentenyl diphosphate. Residues Lys203, Thr204, Gln243, Lys260, and Lys269 each contribute to the dimethylallyl diphosphate site.

It belongs to the FPP/GGPP synthase family. The cofactor is Mg(2+).

The protein localises to the cytoplasm. It carries out the reaction isopentenyl diphosphate + dimethylallyl diphosphate = (2E)-geranyl diphosphate + diphosphate. The enzyme catalyses isopentenyl diphosphate + (2E)-geranyl diphosphate = (2E,6E)-farnesyl diphosphate + diphosphate. It functions in the pathway isoprenoid biosynthesis; farnesyl diphosphate biosynthesis; farnesyl diphosphate from geranyl diphosphate and isopentenyl diphosphate: step 1/1. Its pathway is isoprenoid biosynthesis; geranyl diphosphate biosynthesis; geranyl diphosphate from dimethylallyl diphosphate and isopentenyl diphosphate: step 1/1. With respect to regulation, inhibited by aminobisphosphonate drugs (aBP), such as risedronate and alendronate. Functionally, key enzyme in isoprenoid biosynthesis which catalyzes the formation of farnesyl diphosphate (FPP), a sterol precursor. In Dictyostelium discoideum (Social amoeba), this protein is Probable farnesyl diphosphate synthase DDB_G0278823.